Reading from the N-terminus, the 348-residue chain is MMESRHAQRKNEHLSLAAKYYDQVHQHHYFDQVRLIHDSLPEMTTDDVDLHVQLADNLEIECPFYIEAMTGGSDQALKINRQLAQLAHKHHLAMATGSLSIISKDPQSFSSFEIIREENPDGIIFANLSANASLDQAINAISLLKANALELHINAAQELIMPEGDRDFNWLDNIQYLVSELEVPVIVKEVGFGMSKTTIAKLQTHDVHLINVSGRGGTNFAAIENRRNHDINFESLLDWGQTTPESLLEAHSIRRGKTEIIASGGITSPLDVIKAGVLGARAVGVAGYFLNILQNEGYEALDQTLGEWQVIVKRLLALLGCSSFTELSRVEYVLGTDLLSYARQRHLR.

9-10 (RK) contacts substrate. FMN-binding positions include 68–70 (AMT), Ser98, and Asn127. Residue Gln157 participates in substrate binding. Glu158 contacts Mg(2+). Residues Lys188, Ser213, Thr218, and 286–287 (AG) each bind FMN.

The protein belongs to the IPP isomerase type 2 family. Homooctamer. Dimer of tetramers. Requires FMN as cofactor. NADPH is required as a cofactor. Mg(2+) serves as cofactor.

The protein resides in the cytoplasm. The catalysed reaction is isopentenyl diphosphate = dimethylallyl diphosphate. Its function is as follows. Involved in the biosynthesis of isoprenoids. Catalyzes the 1,3-allylic rearrangement of the homoallylic substrate isopentenyl (IPP) to its allylic isomer, dimethylallyl diphosphate (DMAPP). This is Isopentenyl-diphosphate delta-isomerase from Limosilactobacillus reuteri subsp. reuteri (strain JCM 1112) (Lactobacillus reuteri).